The following is a 715-amino-acid chain: ABC transporter F family member 3 (715 aa).

Thr-2 is modified (N-acetylthreonine). The interval 96–118 (VRMNDGMDDGPVKKKKPEPVDGP) is disordered. ABC transporter domains lie at 175–436 (IHMD…KNQQ) and 504–713 (ISFS…LLQS). ATP contacts are provided by residues 207–214 (GRNGTGKT) and 537–544 (GPNGIGKS).

It belongs to the ABC transporter superfamily. ABCF family. EF3 (TC 3.A.1.121) subfamily.

This Arabidopsis thaliana (Mouse-ear cress) protein is ABC transporter F family member 3 (ABCF3).